We begin with the raw amino-acid sequence, 405 residues long: Adenylosuccinate synthetase (405 aa).

GTP is bound by residues 12–18 (GDEGKGK) and 40–42 (GHT). Catalysis depends on D13, which acts as the Proton acceptor. Mg(2+) is bound by residues D13 and G40. Residues 13 to 16 (DEGK), 38 to 41 (NAGH), T121, R135, Q213, T228, and R297 contribute to the IMP site. The active-site Proton donor is the H41. 293–299 (TTTGRAR) contacts substrate. GTP is bound by residues R299, 325–327 (KMD), and 390–392 (SAG).

It belongs to the adenylosuccinate synthetase family. Homodimer. Requires Mg(2+) as cofactor.

Its subcellular location is the cytoplasm. It catalyses the reaction IMP + L-aspartate + GTP = N(6)-(1,2-dicarboxyethyl)-AMP + GDP + phosphate + 2 H(+). It functions in the pathway purine metabolism; AMP biosynthesis via de novo pathway; AMP from IMP: step 1/2. Plays an important role in the de novo pathway of purine nucleotide biosynthesis. Catalyzes the first committed step in the biosynthesis of AMP from IMP. This chain is Adenylosuccinate synthetase, found in Deinococcus deserti (strain DSM 17065 / CIP 109153 / LMG 22923 / VCD115).